A 58-amino-acid chain; its full sequence is Small ribosomal subunit protein bS21 (58 aa).

Residues 37–58 (FYEKPSVKRKRKSEAARKRKKF) form a disordered region. A compositionally biased stretch (basic residues) spans 43-58 (VKRKRKSEAARKRKKF).

This sequence belongs to the bacterial ribosomal protein bS21 family.

The polypeptide is Small ribosomal subunit protein bS21 (Streptococcus sanguinis (strain SK36)).